Reading from the N-terminus, the 336-residue chain is Large ribosomal subunit protein mL39 (336 aa).

Residues 60–126 enclose the TGS domain; it reads EKIEVKHVGK…TKSCEIKFLT (67 aa). The residue at position 123 (K123) is an N6-acetyllysine.

It belongs to the mitochondrion-specific ribosomal protein mL39 family. In terms of assembly, component of the mitochondrial ribosome large subunit (39S) which comprises a 16S rRNA and about 50 distinct proteins.

Its subcellular location is the mitochondrion. This is Large ribosomal subunit protein mL39 (Mrpl39) from Mus musculus (Mouse).